The sequence spans 597 residues: Gigaxonin (597 aa).

Residues 30–99 (CDAHLVLDGE…IFSGQIRLNE (70 aa)) form the BTB domain. The region spanning 134–236 (CIGIRDFALH…DSSYLREQML (103 aa)) is the BACK domain. 6 Kelch repeats span residues 274 to 326 (CIVT…SAEG), 327 to 374 (FLFV…EIDG), 376 to 421 (LYIL…AMKK), 422 to 468 (KIYA…GVAM), 470 to 522 (LYVF…VYGA), and 528 to 574 (SIYV…AALR).

Interacts with TBCB. Interacts with CUL3. Part of a complex that contains CUL3, RBX1 and GAN. Interacts (via BTB domain) with UBA1. Interacts (via Kelch domains) with MAP1B (via C-terminus) and MAP1S (via C-terminus). In terms of processing, ubiquitinated by E3 ubiquitin ligase complex formed by CUL3 and RBX1 and probably targeted for proteasome-independent degradation. Expressed in brain, heart and muscle (at protein level).

Its subcellular location is the cytoplasm. It is found in the cytoskeleton. Its pathway is protein modification; protein ubiquitination. Probable cytoskeletal component that directly or indirectly plays an important role in neurofilament architecture. May act as a substrate-specific adapter of an E3 ubiquitin-protein ligase complex which mediates the ubiquitination and subsequent proteasomal degradation of target proteins. Controls degradation of TBCB. Controls degradation of MAP1B and MAP1S, and is critical for neuronal maintenance and survival. The sequence is that of Gigaxonin from Mus musculus (Mouse).